The sequence spans 226 residues: Octanoyltransferase (226 aa).

The BPL/LPL catalytic domain occupies 31–226; sequence PETPDALWIC…SQKLGTYLAP (196 aa). Residues 70–77, 159–161, and 172–174 contribute to the substrate site; these read RGGQVTFH, ALG, and GVA. Catalysis depends on cysteine 190, which acts as the Acyl-thioester intermediate.

This sequence belongs to the LipB family.

It is found in the cytoplasm. The catalysed reaction is octanoyl-[ACP] + L-lysyl-[protein] = N(6)-octanoyl-L-lysyl-[protein] + holo-[ACP] + H(+). It functions in the pathway protein modification; protein lipoylation via endogenous pathway; protein N(6)-(lipoyl)lysine from octanoyl-[acyl-carrier-protein]: step 1/2. Its function is as follows. Catalyzes the transfer of endogenously produced octanoic acid from octanoyl-acyl-carrier-protein onto the lipoyl domains of lipoate-dependent enzymes. Lipoyl-ACP can also act as a substrate although octanoyl-ACP is likely to be the physiological substrate. This Variovorax paradoxus (strain S110) protein is Octanoyltransferase.